A 257-amino-acid chain; its full sequence is Small ribosomal subunit protein uS4c (257 aa).

2 consecutive S4 RNA-binding domains span residues 110–170 (MRLD…QLVN) and 189–255 (KTLP…KNYL).

This sequence belongs to the universal ribosomal protein uS4 family. Part of the 30S ribosomal subunit. Contacts protein S5. The interaction surface between S4 and S5 is involved in control of translational fidelity.

Its subcellular location is the plastid. The protein localises to the chloroplast. One of the primary rRNA binding proteins, it binds directly to 16S rRNA where it nucleates assembly of the body of the 30S subunit. In terms of biological role, with S5 and S12 plays an important role in translational accuracy. This chain is Small ribosomal subunit protein uS4c (rps4), found in Chlamydomonas reinhardtii (Chlamydomonas smithii).